Here is a 377-residue protein sequence, read N- to C-terminus: MSSDSSRRIQVPEELKEVLLQFSISFLVEQPPDVIDYAVEYFTKLQSERPSVSHTDQSTDDQLSVNSQDADAEPPVMASSRRKSVFAEAYDPEADDDDDGATAVFPKTDEQRARLVESVKNVLLFRSLEKEQMNQVLDAMFERKVQPGDFIIRQGDDGDNFYVIESGVYKVYINDKHINTYNHTGLFGELALLYNMPRAATVQAETSGLLWAMDRQTFRRILLKSAFRKRKMYEELLNSVPMLKALQNYERMNLADALVSKSYDNGERIIKQGDAADGMYFIEEGTVSVRMDQDDAEVEISQLGKGQYFGELALVTHRPRAASVYATGGVVKLAFLDVKAFERLLGPCMDIMKRNIDDYESQLVKIFGSKNNITDTR.

Residues 48-69 (ERPSVSHTDQSTDDQLSVNSQD) are compositionally biased toward polar residues. Positions 48-78 (ERPSVSHTDQSTDDQLSVNSQDADAEPPVMA) are disordered. Phosphoserine is present on residues Ser-51, Ser-58, Ser-64, Ser-67, and Ser-84. A Pseudophosphorylation motif motif is present at residues 81-85 (RRKSV). Tyr-90 carries the phosphotyrosine modification. Residues 124-239 (LFRS…LLNS), Glu-189, Arg-198, 242-362 (MLKA…YESQ), Glu-311, and Arg-320 each bind 3',5'-cyclic AMP.

Belongs to the cAMP-dependent kinase regulatory chain family. Tetramer, composed of 2 regulatory (R) and 2 catalytic (C) subunits. In the presence of cAMP it dissociates into 2 active monomeric C subunits and an R dimer. Interacts with Akap200. In terms of processing, the pseudophosphorylation site binds to the substrate-binding region of the catalytic chain but is not phosphorylated. The physiological significance of phosphorylations by other kinases is unclear. In terms of tissue distribution, detected in follicle cells, germline-derived cells, germline line stem cells and outer rim of ring canals of nurse cells throughout oogenesis (at protein level).

The protein localises to the cytoplasm. It localises to the cell membrane. Functionally, regulatory subunit of the cAMP-dependent protein kinases involved in cAMP signaling in cells. Mediates membrane association by binding to anchoring proteins, such as Akap200. Might play an essential role in the regulation of neuronal activity in the brain. The chain is cAMP-dependent protein kinase type II regulatory subunit (Pka-R2) from Drosophila melanogaster (Fruit fly).